Consider the following 957-residue polypeptide: Glycine dehydrogenase (decarboxylating) (957 aa).

At Lys-708 the chain carries N6-(pyridoxal phosphate)lysine.

It belongs to the GcvP family. In terms of assembly, the glycine cleavage system is composed of four proteins: P, T, L and H. Pyridoxal 5'-phosphate serves as cofactor.

It carries out the reaction N(6)-[(R)-lipoyl]-L-lysyl-[glycine-cleavage complex H protein] + glycine + H(+) = N(6)-[(R)-S(8)-aminomethyldihydrolipoyl]-L-lysyl-[glycine-cleavage complex H protein] + CO2. In terms of biological role, the glycine cleavage system catalyzes the degradation of glycine. The P protein binds the alpha-amino group of glycine through its pyridoxal phosphate cofactor; CO(2) is released and the remaining methylamine moiety is then transferred to the lipoamide cofactor of the H protein. The protein is Glycine dehydrogenase (decarboxylating) of Escherichia coli (strain K12 / MC4100 / BW2952).